A 1788-amino-acid chain; its full sequence is U3 small nucleolar RNA-associated protein 10 (1788 aa).

Residues 585-622 (LDFQAVVPYAIVALSDPAKKVRRAAAELVTVLGSFYET) form an HEAT 1 repeat. Residues 884 to 905 (PATKRRRVGSSEKSVDSQSPAD) are disordered. 6 HEAT repeats span residues 926 to 962 (AKHP…LVLS), 1049 to 1086 (QTVK…AYEH), 1257 to 1294 (LSIA…SESI), 1301 to 1339 (EALL…KYGK), 1703 to 1740 (EHHK…RLGE), and 1744 to 1781 (QSLP…TLGE).

Belongs to the HEATR1/UTP10 family. Component of the ribosomal small subunit (SSU) processome.

The protein resides in the nucleus. It is found in the nucleolus. Involved in nucleolar processing of pre-18S ribosomal RNA. Involved in ribosome biosynthesis. This Neurospora crassa (strain ATCC 24698 / 74-OR23-1A / CBS 708.71 / DSM 1257 / FGSC 987) protein is U3 small nucleolar RNA-associated protein 10 (rbg-5).